Reading from the N-terminus, the 364-residue chain is FK506-binding protein 4 (364 aa).

Disordered regions lie at residues 92–148 and 168–239; these read SMFG…DDEI and EADK…PTKP. Positions 94 to 148 are enriched in acidic residues; sequence FGDDEHGEDEDNEEEEGEEGEDEEMEGEDEDEDEEDEDEEDEDEEEEDDEEDDEI. Residues 168 to 184 show a composition bias toward basic and acidic residues; that stretch reads EADKNKQQKKPKQEEPV. Over residues 185–239 the composition is skewed to low complexity; sequence KQVTPVKPTAQAAKPTAATTTTTTTTTTTPTKQTTPAKPAAKPVTPTKPVTPTKP. Residues 277 to 363 enclose the PPIase FKBP-type domain; that stretch reads GKKVGVKYIG…IFDVELVSCA (87 aa).

Belongs to the FKBP-type PPIase family. Binds to histones H3 and H4.

It localises to the nucleus. The enzyme catalyses [protein]-peptidylproline (omega=180) = [protein]-peptidylproline (omega=0). Inhibited by both FK506 and rapamycin. Its function is as follows. PPIase that acts as a histone chaperone. Histone proline isomerase that increases the rate of cis-trans isomerization at prolines on the histone H3 N-terminal tail. Proline isomerization influences H3 methylation thereby regulating gene expression. The sequence is that of FK506-binding protein 4 (fkbp4) from Dictyostelium discoideum (Social amoeba).